A 1259-amino-acid chain; its full sequence is Trafficking protein particle complex II-specific subunit 130 homolog (1259 aa).

Residue alanine 2 is modified to N-acetylalanine. Positions 479–526 are disordered; sequence GNIPEMFDGRPSFTEGSGLEASPRTPSSLKVQAPPMSRTNSSPGNFES.

This sequence belongs to the TMEM1 family. Part of the multisubunit TRAPP (transport protein particle) II complex composed of BET3, BET5, TRS20, TRS23, TRS31, TRS33, TRS65, TRS85, TRS120 and TRS130.

It localises to the golgi apparatus. Its subcellular location is the trans-Golgi network. The protein localises to the early endosome. Its function is as follows. Specific subunit of the TRAPP II complex, a highly conserved vesicle tethering complex that is required for the proper transport of proteins in post-Golgi trafficking pathways to the growing cell plate in mitotic active cells. Required for the polarized and selective transport of PIN2, but not PIN1, to the plasma membrane. Not required for ER-to-Golgi as well as biosynthetic and endocytic vacuolar transport. This chain is Trafficking protein particle complex II-specific subunit 130 homolog, found in Arabidopsis thaliana (Mouse-ear cress).